A 101-amino-acid chain; its full sequence is Cysteine-rich PDZ-binding protein (101 aa).

Belongs to the CRIPT family. In terms of assembly, component of the minor spliceosome, which splices U12-type introns.

It localises to the cytoplasm. In terms of biological role, as a component of the minor spliceosome, involved in the splicing of U12-type introns in pre-mRNAs. This is Cysteine-rich PDZ-binding protein (cript) from Ictalurus punctatus (Channel catfish).